The chain runs to 1724 residues: Protein scribble homolog (1724 aa).

Positions methionine 1–glutamate 821 are sufficient for targeting to adherens junction. 17 LRR repeats span residues asparagine 11 to tyrosine 34, asparagine 35 to leucine 58, histidine 59 to phenylalanine 81, glutamine 83 to glutamine 105, leucine 107 to leucine 127, arginine 128 to leucine 150, serine 151 to valine 174, leucine 176 to leucine 196, proline 197 to leucine 219, glutamine 221 to leucine 242, alanine 244 to leucine 265, lysine 266 to cysteine 288, glutamate 289 to leucine 311, lysine 312 to cysteine 334, serine 336 to alanine 357, glutamate 359 to leucine 380, and leucine 382 to glutamine 405. Disordered stretches follow at residues arginine 451–methionine 484, tyrosine 496–threonine 620, and serine 646–phenylalanine 683. The segment covering serine 518 to threonine 534 has biased composition (low complexity). Acidic residues predominate over residues valine 554–tyrosine 567. Over residues phenylalanine 574–glycine 583 the composition is skewed to basic and acidic residues. Residues aspartate 584 to arginine 598 are compositionally biased toward acidic residues. The segment covering glutamate 611–threonine 620 has biased composition (basic and acidic residues). The span at arginine 661–aspartate 678 shows a compositional bias: acidic residues. PDZ domains lie at threonine 731–arginine 818, alanine 867–glutamine 955, glutamate 1005–proline 1094, and glutamate 1101–phenylalanine 1193. The interval glutamine 955 to cysteine 995 is disordered. Disordered regions lie at residues leucine 1283–lysine 1407, lysine 1414–leucine 1433, arginine 1449–valine 1468, and serine 1488–alanine 1555. A compositionally biased stretch (basic and acidic residues) spans phenylalanine 1295–histidine 1306. Polar residues-rich tracts occupy residues proline 1308–threonine 1329, proline 1346–proline 1357, and proline 1364–serine 1385. Residues histidine 1395–lysine 1407 are compositionally biased toward basic and acidic residues. A coiled-coil region spans residues glutamate 1430 to glutamate 1461. Acidic residues predominate over residues leucine 1453 to aspartate 1463. Residues glycine 1490–threonine 1506 show a composition bias toward polar residues. Positions proline 1507 to serine 1518 are enriched in low complexity. Residues glycine 1521–glutamine 1538 show a composition bias toward basic and acidic residues. The residue at position 1609 (serine 1609) is a Phosphoserine. A disordered region spans residues isoleucine 1621–valine 1684. A compositionally biased stretch (basic and acidic residues) spans lysine 1623–threonine 1632.

Post-translationally, palmitoylated.

The protein resides in the cell membrane. It is found in the cell junction. Its subcellular location is the adherens junction. It localises to the cell projection. The protein localises to the lamellipodium. The protein resides in the cytoplasm. It is found in the postsynapse. Its subcellular location is the presynapse. In terms of biological role, scaffold protein involved in different aspects of polarized cells differentiation regulating epithelial and neuronal morphogenesis. Regulates the caudal migration of the nVII motor neurons. Required for convergent extension movements during gastrulation. This chain is Protein scribble homolog (scrib), found in Danio rerio (Zebrafish).